The sequence spans 599 residues: Calmodulin-binding protein 60 E (599 aa).

Residues M1–R21 form a disordered region. A calmodulin-binding region spans residues M1–R80. The DNA-binding stretch occupies residues E150–N273.

It belongs to the plant ACBP60 protein family. In terms of assembly, interacts with calmodulin (CaM).

It is found in the nucleus. Its function is as follows. Transcription activator that binds DNA in a sequence-specific manner, likely 5'-GAAATTTTGG-3', to promote the expression of target genes. The polypeptide is Calmodulin-binding protein 60 E (Arabidopsis thaliana (Mouse-ear cress)).